The primary structure comprises 486 residues: Bifunctional protein HldE (486 aa).

The interval 1–329 (MSSRLSGLLD…AALSVAGPVG (329 aa)) is ribokinase. 204 to 207 (NAFE) is a binding site for ATP. Asp274 is a catalytic residue. The interval 355–486 (FTNGCFDILH…AIIARSETGK (132 aa)) is cytidylyltransferase.

The protein in the N-terminal section; belongs to the carbohydrate kinase PfkB family. In the C-terminal section; belongs to the cytidylyltransferase family. Homodimer.

It carries out the reaction D-glycero-beta-D-manno-heptose 7-phosphate + ATP = D-glycero-beta-D-manno-heptose 1,7-bisphosphate + ADP + H(+). The enzyme catalyses D-glycero-beta-D-manno-heptose 1-phosphate + ATP + H(+) = ADP-D-glycero-beta-D-manno-heptose + diphosphate. It functions in the pathway nucleotide-sugar biosynthesis; ADP-L-glycero-beta-D-manno-heptose biosynthesis; ADP-L-glycero-beta-D-manno-heptose from D-glycero-beta-D-manno-heptose 7-phosphate: step 1/4. It participates in nucleotide-sugar biosynthesis; ADP-L-glycero-beta-D-manno-heptose biosynthesis; ADP-L-glycero-beta-D-manno-heptose from D-glycero-beta-D-manno-heptose 7-phosphate: step 3/4. In terms of biological role, catalyzes the phosphorylation of D-glycero-D-manno-heptose 7-phosphate at the C-1 position to selectively form D-glycero-beta-D-manno-heptose-1,7-bisphosphate. Functionally, catalyzes the ADP transfer from ATP to D-glycero-beta-D-manno-heptose 1-phosphate, yielding ADP-D-glycero-beta-D-manno-heptose. This Hyphomonas neptunium (strain ATCC 15444) protein is Bifunctional protein HldE.